Reading from the N-terminus, the 198-residue chain is Adenine phosphoribosyltransferase (198 aa).

Belongs to the purine/pyrimidine phosphoribosyltransferase family. Homodimer.

It localises to the cytoplasm. It catalyses the reaction AMP + diphosphate = 5-phospho-alpha-D-ribose 1-diphosphate + adenine. The protein operates within purine metabolism; AMP biosynthesis via salvage pathway; AMP from adenine: step 1/1. Its function is as follows. Catalyzes a salvage reaction resulting in the formation of AMP, that is energically less costly than de novo synthesis. This is Adenine phosphoribosyltransferase from Serratia proteamaculans (strain 568).